A 156-amino-acid polypeptide reads, in one-letter code: Transcriptional repressor NrdR (156 aa).

The segment at 3 to 34 (CPSCQFNGTRVVDSRPVDDNKEIRRRRECESC) is a zinc-finger region. The region spanning 49–139 (LVVVKKEGSR…VYRQFKDINV (91 aa)) is the ATP-cone domain.

The protein belongs to the NrdR family. It depends on Zn(2+) as a cofactor.

In terms of biological role, negatively regulates transcription of bacterial ribonucleotide reductase nrd genes and operons by binding to NrdR-boxes. The polypeptide is Transcriptional repressor NrdR (Lysinibacillus sphaericus (strain C3-41)).